We begin with the raw amino-acid sequence, 456 residues long: Bifunctional protein GlmU (456 aa).

The segment at Met1–Arg229 is pyrophosphorylase. UDP-N-acetyl-alpha-D-glucosamine contacts are provided by residues Leu11–Gly14, Lys25, Gln76, Gly81–Thr82, Tyr103–Asp105, Gly140, Glu154, Asn169, and Asn227. Asp105 is a Mg(2+) binding site. Asn227 contributes to the Mg(2+) binding site. Residues Leu230–Ala250 are linker. The segment at Gly251–Lys456 is N-acetyltransferase. UDP-N-acetyl-alpha-D-glucosamine is bound by residues Arg333 and Lys351. Residue His363 is the Proton acceptor of the active site. The UDP-N-acetyl-alpha-D-glucosamine site is built by Tyr366 and Asn377. Residues Ala380, Asn386–Tyr387, Ser405, Ala423, and Arg440 contribute to the acetyl-CoA site.

In the N-terminal section; belongs to the N-acetylglucosamine-1-phosphate uridyltransferase family. The protein in the C-terminal section; belongs to the transferase hexapeptide repeat family. In terms of assembly, homotrimer. Mg(2+) is required as a cofactor.

The protein resides in the cytoplasm. The enzyme catalyses alpha-D-glucosamine 1-phosphate + acetyl-CoA = N-acetyl-alpha-D-glucosamine 1-phosphate + CoA + H(+). It catalyses the reaction N-acetyl-alpha-D-glucosamine 1-phosphate + UTP + H(+) = UDP-N-acetyl-alpha-D-glucosamine + diphosphate. It functions in the pathway nucleotide-sugar biosynthesis; UDP-N-acetyl-alpha-D-glucosamine biosynthesis; N-acetyl-alpha-D-glucosamine 1-phosphate from alpha-D-glucosamine 6-phosphate (route II): step 2/2. It participates in nucleotide-sugar biosynthesis; UDP-N-acetyl-alpha-D-glucosamine biosynthesis; UDP-N-acetyl-alpha-D-glucosamine from N-acetyl-alpha-D-glucosamine 1-phosphate: step 1/1. The protein operates within bacterial outer membrane biogenesis; LPS lipid A biosynthesis. Functionally, catalyzes the last two sequential reactions in the de novo biosynthetic pathway for UDP-N-acetylglucosamine (UDP-GlcNAc). The C-terminal domain catalyzes the transfer of acetyl group from acetyl coenzyme A to glucosamine-1-phosphate (GlcN-1-P) to produce N-acetylglucosamine-1-phosphate (GlcNAc-1-P), which is converted into UDP-GlcNAc by the transfer of uridine 5-monophosphate (from uridine 5-triphosphate), a reaction catalyzed by the N-terminal domain. The sequence is that of Bifunctional protein GlmU from Citrobacter koseri (strain ATCC BAA-895 / CDC 4225-83 / SGSC4696).